The sequence spans 284 residues: Shikimate dehydrogenase (NADP(+)) (284 aa).

Residues 20 to 22 (SIS) and serine 67 each bind shikimate. The Proton acceptor role is filled by lysine 71. Aspartate 83 is a binding site for NADP(+). Shikimate contacts are provided by asparagine 92 and aspartate 107. NADP(+) contacts are provided by residues 129-133 (GAGGA) and isoleucine 227. A shikimate-binding site is contributed by tyrosine 229. Glycine 250 is an NADP(+) binding site.

It belongs to the shikimate dehydrogenase family. In terms of assembly, homodimer.

The catalysed reaction is shikimate + NADP(+) = 3-dehydroshikimate + NADPH + H(+). It participates in metabolic intermediate biosynthesis; chorismate biosynthesis; chorismate from D-erythrose 4-phosphate and phosphoenolpyruvate: step 4/7. Functionally, involved in the biosynthesis of the chorismate, which leads to the biosynthesis of aromatic amino acids. Catalyzes the reversible NADPH linked reduction of 3-dehydroshikimate (DHSA) to yield shikimate (SA). The polypeptide is Shikimate dehydrogenase (NADP(+)) (Streptococcus pneumoniae (strain CGSP14)).